An 89-amino-acid chain; its full sequence is uncharacterized protein (89 aa).

The next 2 membrane-spanning stretches (helical) occupy residues 11 to 31 and 63 to 83; these read IFGAVILVSMIGALVAEPIAL and AAISAALGPAGLASGVFTVVF.

The protein localises to the cell membrane. This is an uncharacterized protein from Methanocaldococcus jannaschii (strain ATCC 43067 / DSM 2661 / JAL-1 / JCM 10045 / NBRC 100440) (Methanococcus jannaschii).